The sequence spans 178 residues: Transmembrane protein 196 (178 aa).

A run of 4 helical transmembrane segments spans residues 11–31 (LLVL…VGAV), 47–67 (SSPV…ILCA), 73–93 (LVMI…ILNF), and 106–126 (LYPL…GCTL).

As to expression, expression is significantly decreased in lung cancer cells compared to normal lung tissue (at protein level).

It localises to the cytoplasm. It is found in the membrane. Its function is as follows. Acts as a tumor suppressor in lung cancer. Inhibits tumor cell growth by inhibiting cell proliferation and migration and promoting cell apoptosis. Inhibits metastasis of lung cancer by suppressing beta-catenin expression in the Wnt/beta-catenin signaling pathway. This chain is Transmembrane protein 196 (TMEM196), found in Homo sapiens (Human).